The following is a 332-amino-acid chain: Cyclin-dependent kinase 1 (332 aa).

The Protein kinase domain maps to 22–312 (FTKLEKIGEG…AKKALVHPYF (291 aa)). ATP is bound by residues 28-36 (IGEGTYGVV) and Lys51. A Phosphothreonine modification is found at Thr32. Position 33 is a phosphotyrosine (Tyr33). Catalysis depends on Asp146, which acts as the Proton acceptor.

Belongs to the protein kinase superfamily. CMGC Ser/Thr protein kinase family. CDC2/CDKX subfamily. In terms of assembly, forms a stable but non-covalent complex with a regulatory subunit and with a cyclin. Interacts with cks-1. Phosphorylated.

It is found in the nucleus. The protein localises to the cytoplasm. It localises to the cytoskeleton. The protein resides in the microtubule organizing center. Its subcellular location is the centrosome. It is found in the chromosome. It carries out the reaction L-seryl-[protein] + ATP = O-phospho-L-seryl-[protein] + ADP + H(+). The enzyme catalyses L-threonyl-[protein] + ATP = O-phospho-L-threonyl-[protein] + ADP + H(+). The catalysed reaction is [DNA-directed RNA polymerase] + ATP = phospho-[DNA-directed RNA polymerase] + ADP + H(+). Phosphorylation both activates and inactivates the enzyme depending on the site of phosphorylation. In terms of biological role, plays a key role in the control of the eukaryotic cell cycle. Required for entry into S-phase and mitosis. Acts as a component of the kinase complex that phosphorylates the repetitive C-terminus of RNA polymerase II. May function in concert with npp-16 to arrest prophase blastomeres in response to anoxia. The chain is Cyclin-dependent kinase 1 (cdk-1) from Caenorhabditis elegans.